A 306-amino-acid chain; its full sequence is MAEKVAVLLGGTSAEREVSLLSGQAVLAGLKEAGIDAYGVDTKDFPVTQLKEQGFDKVFIALHGRGGEDGTLQGVLEFLQLPYTGSGVMASALTMDKLRTKLVWQALGLPISPYVALNRQQFETLSPEELVACVAKLGLPLIVKPSHEGSSVGMSKVDHASELQKALVEAFQHDSDVLIEKWLSGPEFTVAILGDEVLPSIRIQPPGVFYDYDAKYLSDKTQYFCPSGLSDESEQQLAALALQAYHALDCSGWGRVDVMQDRDGHFYLLEVNTSPGMTSHSLVPMAARQYGLSFSQLVARILMLAD.

The region spanning 101 to 303 (KLVWQALGLP…FSQLVARILM (203 aa)) is the ATP-grasp domain. 134-189 (VAKLGLPLIVKPSHEGSSVGMSKVDHASELQKALVEAFQHDSDVLIEKWLSGPEFT) is an ATP binding site. Residues D257, E270, and N272 each coordinate Mg(2+).

Belongs to the D-alanine--D-alanine ligase family. The cofactor is Mg(2+). Mn(2+) serves as cofactor.

Its subcellular location is the cytoplasm. It catalyses the reaction 2 D-alanine + ATP = D-alanyl-D-alanine + ADP + phosphate + H(+). It functions in the pathway cell wall biogenesis; peptidoglycan biosynthesis. In terms of biological role, cell wall formation. This chain is D-alanine--D-alanine ligase, found in Yersinia pseudotuberculosis serotype O:1b (strain IP 31758).